A 321-amino-acid chain; its full sequence is Olfactory receptor 51V1 (321 aa).

Topologically, residues 1–34 (MFLSSRMITSVSPSTSTNSSFLLTGFSGMEQQYP) are extracellular. An N-linked (GlcNAc...) asparagine glycan is attached at asparagine 18. Residues 35–55 (WLSIPFSSIYAMVLLGNCMVL) traverse the membrane as a helical segment. Residues 56–63 (HVIWTEPS) lie on the Cytoplasmic side of the membrane. The helical transmembrane segment at 64-84 (LHQPMFYFLSMLALTDLCMGL) threads the bilayer. Over 85 to 108 (STVYTVLGILWGIIREISLDSCIA) the chain is Extracellular. A disulfide bridge links cysteine 106 with cysteine 188. Residues 109 to 129 (QSYFIHGLSFMESSVLLTMAF) traverse the membrane as a helical segment. The Cytoplasmic portion of the chain corresponds to 130–148 (DRYIAICNPLRYSSILTNS). The helical transmembrane segment at 149–169 (RIIKIGLTIIGRSFFFITPPI) threads the bilayer. Residues 170 to 205 (ICLKFFNYCHFHILSHSFCLHQDLLRLACSDIRFNS) lie on the Extracellular side of the membrane. A helical transmembrane segment spans residues 206–226 (YYALMLVICILLLDAILILFS). Residues 227–246 (YILILKSVLAVASQEERHKL) lie on the Cytoplasmic side of the membrane. A helical transmembrane segment spans residues 247 to 267 (FQTCISHICAVLVFYIPIISL). Topologically, residues 268-282 (TMVHRFGKHLSPVAH) are extracellular. Residues 283–303 (VLIGNIYILFPPLMNPIIYSV) form a helical membrane-spanning segment. At 304 to 321 (KTQQIHTRMLRLFSLKRY) the chain is on the cytoplasmic side.

It belongs to the G-protein coupled receptor 1 family.

The protein localises to the cell membrane. Odorant receptor. The sequence is that of Olfactory receptor 51V1 (OR51V1) from Homo sapiens (Human).